The following is a 211-amino-acid chain: Metalloproteinase inhibitor 3 (211 aa).

The N-terminal stretch at 1-23 (MTPWLGLIVLLGSWSLGDWGAEA) is a signal peptide. Cysteine 24 contacts Zn(2+). 2 involved in metalloproteinase-binding regions span residues 24–27 (CTCS) and 88–89 (ES). Disulfide bonds link cysteine 24–cysteine 91, cysteine 26–cysteine 118, cysteine 36–cysteine 143, cysteine 145–cysteine 192, cysteine 150–cysteine 155, and cysteine 163–cysteine 184. Residues 24–143 (CTCSPSHPQD…GLNYRYHLGC (120 aa)) enclose the NTR domain. The segment at 105-188 (TGRVYDGKMY…SKHYACIRQK (84 aa)) is mediates interaction with EFEMP1. Asparagine 207 is a glycosylation site (N-linked (GlcNAc...) asparagine).

The protein belongs to the protease inhibitor I35 (TIMP) family. Interacts with EFEMP1. Interacts with KDR.

It localises to the secreted. Its subcellular location is the extracellular space. It is found in the extracellular matrix. Its function is as follows. Mediates a variety of processes including matrix regulation and turnover, inflammation, and angiogenesis, through reversible inhibition of zinc protease superfamily enzymes, primarily matrix metalloproteinases (MMPs). Regulates extracellular matrix (ECM) remodeling through inhibition of matrix metalloproteinases (MMP) including MMP-1, MMP-2, MMP-3, MMP-7, MMP-9, MMP-13, MMP-14 and MMP-15. Additionally, modulates the processing of amyloid precursor protein (APP) and apolipoprotein E receptor ApoER2 by inhibiting two alpha-secretases ADAM10 and ADAM17. Functions as a tumor suppressor and a potent inhibitor of angiogenesis. Exerts its anti-angiogenic effect by directly interacting with vascular endothelial growth factor (VEGF) receptor-2/KDR, preventing its binding to the VEGFA ligand. Selectively induces apoptosis in angiogenic endothelial cells through a caspase-independent cell death pathway. Mechanistically, inhibits matrix-induced focal adhesion kinase PTK2 tyrosine phosphorylation and association with paxillin/PXN and disrupts the incorporation of ITGB3, PTK2 and PXN into focal adhesion contacts on the matrix. In Macaca mulatta (Rhesus macaque), this protein is Metalloproteinase inhibitor 3 (TIMP3).